Consider the following 391-residue polypeptide: MVAEKTIKSMVSKAELPDNIKEELYAKLIEYNEKYKLKKDEIQAIIDETVREYQKALIEPGEAVGTVAAQSIGEPSTQMTLNTFHYAGVAEINVTLGLPRIIEIVDARKNPSTPIMTVYLDEEHRYDRDKALEVARRIEGTTLENLAREETIDILNMEYVVEIDPERLEKAGLDMEKVVRKLTGSFKSAEFEAEGYTLVVRPKKVTKLSDLRKIAEKVKKHRLKGLSGVGKTIIRKEGDEYVIYTEGSNFKQVLKVPGVDPTRTRTNNIWEIAEVLGIEAARNAIIDEIVSTMREQGLEVDVRHIMLVADMMTLDGVIRPIGRHGIVGEKASVLARAAFEITTQHLFAAAERGEVDPLNGVVENVLIGQPVPVGTGIVKLAMSLPLRPKRE.

The protein belongs to the RNA polymerase beta' chain family. In terms of assembly, part of the RNA polymerase complex.

The protein resides in the cytoplasm. Its subcellular location is the chromosome. The enzyme catalyses RNA(n) + a ribonucleoside 5'-triphosphate = RNA(n+1) + diphosphate. DNA-dependent RNA polymerase (RNAP) catalyzes the transcription of DNA into RNA using the four ribonucleoside triphosphates as substrates. Forms part of the jaw domain. The polypeptide is DNA-directed RNA polymerase subunit Rpo1C (Thermococcus kodakarensis (strain ATCC BAA-918 / JCM 12380 / KOD1) (Pyrococcus kodakaraensis (strain KOD1))).